The primary structure comprises 281 residues: BURP domain-containing protein BNM2C (281 aa).

A signal peptide spans 1–25 (MASLRFSVTFPALFSLLLSLWVVDA). A BURP domain is found at 59 to 281 (FFKISDLKLG…PLDNIVWVSK (223 aa)).

Expressed in the radicle of germinating seeds 2 days post-imbibition (DPI) and in roots of 30-DPI young plants. Expressed in the embryo and seed coat tissues of developing seeds. The protein accumulates only in seeds and only long after transcript accumulation becomes evident.

Its subcellular location is the protein storage vacuole. This chain is BURP domain-containing protein BNM2C, found in Brassica napus (Rape).